The following is a 423-amino-acid chain: Dihydroorotase (423 aa).

Histidine 60 and histidine 62 together coordinate Zn(2+). Substrate-binding positions include 62 to 64 (HFR) and asparagine 94. Zn(2+)-binding residues include aspartate 152, histidine 179, histidine 232, and aspartate 305. The active site involves aspartate 305. Residues histidine 309 and 323 to 324 (PG) contribute to the substrate site.

Belongs to the metallo-dependent hydrolases superfamily. DHOase family. Class I DHOase subfamily. The cofactor is Zn(2+).

The catalysed reaction is (S)-dihydroorotate + H2O = N-carbamoyl-L-aspartate + H(+). It functions in the pathway pyrimidine metabolism; UMP biosynthesis via de novo pathway; (S)-dihydroorotate from bicarbonate: step 3/3. Its function is as follows. Catalyzes the reversible cyclization of carbamoyl aspartate to dihydroorotate. This chain is Dihydroorotase, found in Sulfurihydrogenibium sp. (strain YO3AOP1).